A 326-amino-acid polypeptide reads, in one-letter code: UDP-3-O-acylglucosamine N-acyltransferase (326 aa).

Residue histidine 235 is the Proton acceptor of the active site.

This sequence belongs to the transferase hexapeptide repeat family. LpxD subfamily. As to quaternary structure, homotrimer.

It catalyses the reaction a UDP-3-O-[(3R)-3-hydroxyacyl]-alpha-D-glucosamine + a (3R)-hydroxyacyl-[ACP] = a UDP-2-N,3-O-bis[(3R)-3-hydroxyacyl]-alpha-D-glucosamine + holo-[ACP] + H(+). It functions in the pathway bacterial outer membrane biogenesis; LPS lipid A biosynthesis. Catalyzes the N-acylation of UDP-3-O-acylglucosamine using 3-hydroxyacyl-ACP as the acyl donor. Is involved in the biosynthesis of lipid A, a phosphorylated glycolipid that anchors the lipopolysaccharide to the outer membrane of the cell. The polypeptide is UDP-3-O-acylglucosamine N-acyltransferase (Helicobacter hepaticus (strain ATCC 51449 / 3B1)).